A 238-amino-acid polypeptide reads, in one-letter code: MKPKASHALRSPINTPIMDHDSEARQMLESLCASQGIALDPAQIDKLVYYGELLGEWNMKINLISRKEDAPVILKHVFHSLLISLHHPFTEGEKVLDLGTGGGLPGIPLAIAFPKTDFLLVDATGKKITACQGMITALGLKNATALHSRVEELKGLAFDTVLSRQVAPLADLARYARPLLKKGGMLACLKGGNLKKEIAEALREGAETDGFPSSVELHPIDDISPFFSEKQIVIAARQ.

S-adenosyl-L-methionine-binding positions include glycine 99, leucine 104, 122–124, 150–151, and arginine 164; these read DAT and VE.

This sequence belongs to the methyltransferase superfamily. RNA methyltransferase RsmG family.

Its subcellular location is the cytoplasm. Functionally, specifically methylates the N7 position of a guanine in 16S rRNA. The protein is Ribosomal RNA small subunit methyltransferase G of Chlorobium luteolum (strain DSM 273 / BCRC 81028 / 2530) (Pelodictyon luteolum).